The sequence spans 1201 residues: Vitamin B12-dependent ribonucleotide reductase (1201 aa).

Residues S153, 198 to 199 (AC), G230, 482 to 486 (NPCSE), and 683 to 687 (PTGTI) contribute to the substrate site. A disulfide bond links C199 and C495. N482 functions as the Proton acceptor in the catalytic mechanism. The active-site Cysteine radical intermediate is C484. E486 (proton acceptor) is an active-site residue. Over residues 1100 to 1118 (DEIGSKRATAESNGQEKET) the composition is skewed to basic and acidic residues. The segment at 1100 to 1120 (DEIGSKRATAESNGQEKETLS) is disordered.

This sequence belongs to the ribonucleoside diphosphate reductase class-2 family. Adenosylcob(III)alamin is required as a cofactor.

The catalysed reaction is a 2'-deoxyribonucleoside 5'-diphosphate + [thioredoxin]-disulfide + H2O = a ribonucleoside 5'-diphosphate + [thioredoxin]-dithiol. Catalyzes the reduction of ribonucleotides to deoxyribonucleotides. May function to provide a pool of deoxyribonucleotide precursors for DNA repair during oxygen limitation and/or for immediate growth after restoration of oxygen. This is Vitamin B12-dependent ribonucleotide reductase (nrdJ) from Leptospira interrogans serogroup Icterohaemorrhagiae serovar Lai (strain 56601).